The chain runs to 193 residues: Acyl carrier protein phosphodiesterase (193 aa).

It belongs to the AcpH family.

The catalysed reaction is holo-[ACP] + H2O = apo-[ACP] + (R)-4'-phosphopantetheine + H(+). In terms of biological role, converts holo-ACP to apo-ACP by hydrolytic cleavage of the phosphopantetheine prosthetic group from ACP. The polypeptide is Acyl carrier protein phosphodiesterase (Salmonella choleraesuis (strain SC-B67)).